The sequence spans 308 residues: Endonuclease G, mitochondrial (308 aa).

His-148 (proton acceptor) is an active-site residue. A Mg(2+)-binding site is contributed by Asn-180.

This sequence belongs to the DNA/RNA non-specific endonuclease family. As to quaternary structure, homodimer; disulfide-linked. Interacts with crn-5, crn-4, crn-1 and cyn-13. Requires Mg(2+) as cofactor.

Its subcellular location is the mitochondrion. Endonuclease important for programmed cell death; it mediates apoptotic DNA fragmentation. The sequence is that of Endonuclease G, mitochondrial (cps-6) from Caenorhabditis elegans.